The primary structure comprises 292 residues: Tetratricopeptide repeat protein 1 (292 aa).

Residues 20–125 (TDPQEAECLH…SSRLKEEGNE (106 aa)) are disordered. Composition is skewed to basic and acidic residues over residues 36–49 (KEQH…KDVD) and 75–85 (GADKLENKPED). Acidic residues predominate over residues 86–98 (DMNPSELDEEYLM). Position 90 is a phosphoserine (Ser90). Positions 99–125 (ELEKNMPDEEKKRRREESSRLKEEGNE) are enriched in basic and acidic residues. TPR repeat units lie at residues 116–149 (SSRL…CPSC), 155–188 (SVLF…NPSY), and 189–222 (IRAI…DPSV).

As to quaternary structure, interacts with the GAP domain of NF1. Interacts (via TPR repeats) with HSP90AA1 and HSPA8.

The protein is Tetratricopeptide repeat protein 1 (TTC1) of Bos taurus (Bovine).